An 879-amino-acid polypeptide reads, in one-letter code: MKKRTKYRYWLNSLAFFGCGVSVGAFFTLFLMGTQSDVSPLFVKNINIQLPSSTHQQKIEPLNLPTNISKTEIASWGSEFQSKVLDFYARDGEEHDNKIRYQLPSLSFAWTGGKELVSDFARLHGARNFVAYFDQYWRFWSNPNWPAGQVDRVDVLCEWNSDKQTISDINFSDQFVFASARFEGKIANFGFAGQTMKDINESFQERVLSIYKPRTLVYLTSQADAERVDYYEEFVNNLTALIKKQVGEKAEKDNFFILQLHWKTNDSAFNEKLSVLNFVALATVKQLTDQNRNFASKIKVVDHFEGDFVPSDWLSGNYLSEDKVSLSLQGEFAIGKQLAQVLKATGAEPLPVEVTEPSLEAIPINEETQFDVKNYYSFGHYHDTNVINDRIDFDDPNYNLETDFFNNAKANLVTTSNPFTVTWKTKTKELEIESTEVNPNGLQYQLSFASDFNARDIKKRPTSYLRWNGTITNKQIDISLYWKYIHKALDIKENEPLNYLLQITRTDGQGSYQVINGWINKEKDNTPTIFDFLKDKTQANWLFIGDSMTHGVGTDGYSSAPQLLEQSLKNDFGRYRDVVINSAINGSNTSLELYMQNHRFKQYKNIDVYVLNLGTNDINQLAQGVYTVEQYKHNLTQILDLLHTQSPQAHVVLANIAPSSLLRSSEKNWKTFNDFLEGIPKDSNYSSFVHLLDQKSLFLQLAKVSGIDINENKLFNTDFLKKSFYFADKFSHLSVNGNVEYMRNILTTVGFDWQNSAFASLGYLSFGYLKKPATVVELPEVTVDDQTGVLDIKQSVPPKLKVNKQGFEPVFITFTNTNNNEQVTVVLNNWSQWETHKTDFAPWLKCKHWNIDVKQIRRVKTTFRDQENANFFELIESKQ.

Residues 14-34 (LAFFGCGVSVGAFFTLFLMGT) form a helical membrane-spanning segment.

The protein resides in the membrane. This is an uncharacterized protein from Mycoplasma pneumoniae (strain ATCC 29342 / M129 / Subtype 1) (Mycoplasmoides pneumoniae).